The chain runs to 155 residues: Large ribosomal subunit protein uL30 (155 aa).

This sequence belongs to the universal ribosomal protein uL30 family. As to quaternary structure, part of the 50S ribosomal subunit.

This Pyrococcus abyssi (strain GE5 / Orsay) protein is Large ribosomal subunit protein uL30.